Reading from the N-terminus, the 336-residue chain is Dihydroorotate dehydrogenase (quinone) (336 aa).

FMN is bound by residues 62–66 (AGLDK) and Thr-86. Residue Lys-66 participates in substrate binding. Substrate is bound at residue 111–115 (NRMGF). FMN-binding residues include Asn-139 and Asn-172. Residue Asn-172 coordinates substrate. The active-site Nucleophile is the Ser-175. Asn-177 is a substrate binding site. Positions 217 and 245 each coordinate FMN. 246–247 (NT) serves as a coordination point for substrate. Residues Gly-268, Gly-297, and 318–319 (YS) each bind FMN.

It belongs to the dihydroorotate dehydrogenase family. Type 2 subfamily. Monomer. It depends on FMN as a cofactor.

Its subcellular location is the cell membrane. The enzyme catalyses (S)-dihydroorotate + a quinone = orotate + a quinol. It participates in pyrimidine metabolism; UMP biosynthesis via de novo pathway; orotate from (S)-dihydroorotate (quinone route): step 1/1. Functionally, catalyzes the conversion of dihydroorotate to orotate with quinone as electron acceptor. The sequence is that of Dihydroorotate dehydrogenase (quinone) from Citrobacter koseri (strain ATCC BAA-895 / CDC 4225-83 / SGSC4696).